Reading from the N-terminus, the 234-residue chain is Glucosamine-6-phosphate deaminase (234 aa).

Catalysis depends on Asp62, which acts as the Proton acceptor; for enolization step. Residue Asn128 is the For ring-opening step of the active site. His130 serves as the catalytic Proton acceptor; for ring-opening step. The active-site For ring-opening step is Glu135.

Belongs to the glucosamine/galactosamine-6-phosphate isomerase family. NagB subfamily.

The catalysed reaction is alpha-D-glucosamine 6-phosphate + H2O = beta-D-fructose 6-phosphate + NH4(+). It functions in the pathway amino-sugar metabolism; N-acetylneuraminate degradation; D-fructose 6-phosphate from N-acetylneuraminate: step 5/5. Its function is as follows. Catalyzes the reversible isomerization-deamination of glucosamine 6-phosphate (GlcN6P) to form fructose 6-phosphate (Fru6P) and ammonium ion. This Streptococcus pyogenes serotype M18 (strain MGAS8232) protein is Glucosamine-6-phosphate deaminase.